Reading from the N-terminus, the 228-residue chain is MARLRYLGHAAFDVELEGFDGRKRRILLDPWLENPLSPVKPSDYRGARVDYIFVTHDHGDHLGNAVELARATGAKVVAVYELAEELSKEGVQAVGANIGGPLALEGIQAVFTPALHSSSKGAPTGVVVRGRDTAVYHAGDTGLFGDMRLIGELYAPDVALLPIGGHFTMGVVEALKAVELLRPRLAIPMHYNTFPEIRADPEKFKELVEATTRTKVVVLKPGDYVEYP.

It belongs to the UPF0173 family.

This chain is UPF0173 metal-dependent hydrolase Tpen_1493, found in Thermofilum pendens (strain DSM 2475 / Hrk 5).